The following is a 478-amino-acid chain: Aspartyl/glutamyl-tRNA(Asn/Gln) amidotransferase subunit B 2 (478 aa).

It belongs to the GatB/GatE family. GatB subfamily. In terms of assembly, heterotrimer of A, B and C subunits.

The catalysed reaction is L-glutamyl-tRNA(Gln) + L-glutamine + ATP + H2O = L-glutaminyl-tRNA(Gln) + L-glutamate + ADP + phosphate + H(+). It catalyses the reaction L-aspartyl-tRNA(Asn) + L-glutamine + ATP + H2O = L-asparaginyl-tRNA(Asn) + L-glutamate + ADP + phosphate + 2 H(+). In terms of biological role, allows the formation of correctly charged Asn-tRNA(Asn) or Gln-tRNA(Gln) through the transamidation of misacylated Asp-tRNA(Asn) or Glu-tRNA(Gln) in organisms which lack either or both of asparaginyl-tRNA or glutaminyl-tRNA synthetases. The reaction takes place in the presence of glutamine and ATP through an activated phospho-Asp-tRNA(Asn) or phospho-Glu-tRNA(Gln). This chain is Aspartyl/glutamyl-tRNA(Asn/Gln) amidotransferase subunit B 2 (gatB2), found in Clostridium acetobutylicum (strain ATCC 824 / DSM 792 / JCM 1419 / IAM 19013 / LMG 5710 / NBRC 13948 / NRRL B-527 / VKM B-1787 / 2291 / W).